Here is a 53-residue protein sequence, read N- to C-terminus: Mannose/glucose-specific lectin alpha chain (53 aa).

Belongs to the leguminous lectin family. In terms of assembly, heterodimer of an alpha and a beta chain.

In terms of biological role, this lectin specifically binds mannose and glucose. This is Mannose/glucose-specific lectin alpha chain from Vicia cracca (Bird vetch).